The primary structure comprises 428 residues: G2/mitotic-specific cyclin-1 (428 aa).

Residues 1 to 22 (MKFSEEKNVSNNPTNFEGGLDS) are disordered.

This sequence belongs to the cyclin family. Cyclin AB subfamily. As to quaternary structure, interacts with the CDC2 protein kinase to form a serine/threonine kinase holoenzyme complex also known as maturation promoting factor (MPF). The cyclin subunit imparts substrate specificity to the complex.

Essential for the control of the cell cycle at the G2/M (mitosis) transition. This is G2/mitotic-specific cyclin-1 from Medicago sativa subsp. varia (Alfalfa).